Here is a 512-residue protein sequence, read N- to C-terminus: Maturase K (512 aa).

This sequence belongs to the intron maturase 2 family. MatK subfamily.

The protein localises to the plastid. It localises to the chloroplast. In terms of biological role, usually encoded in the trnK tRNA gene intron. Probably assists in splicing its own and other chloroplast group II introns. The polypeptide is Maturase K (Koelreuteria paniculata (Goldenrain tree)).